Here is a 435-residue protein sequence, read N- to C-terminus: UPF0761 membrane protein mma_2179 (435 aa).

The next 6 helical transmembrane spans lie at 45–65, 103–123, 142–162, 177–197, 208–228, and 252–272; these read VLAL…FPLF, LSAF…LMID, ILVY…SMTF, VPFV…MVAF, LVEW…FEIV, and FPIF…GAVV.

This sequence belongs to the UPF0761 family.

The protein localises to the cell inner membrane. The polypeptide is UPF0761 membrane protein mma_2179 (Janthinobacterium sp. (strain Marseille) (Minibacterium massiliensis)).